Consider the following 181-residue polypeptide: Large ribosomal subunit protein uL22 (181 aa).

Residues 157-181 are disordered; the sequence is PEAAKKPGKKTSAVEKSKKATAATH.

It belongs to the universal ribosomal protein uL22 family.

The chain is Large ribosomal subunit protein uL22 (RpL17) from Biphyllus lunatus (Beetle).